A 347-amino-acid chain; its full sequence is Probable inactive UDP-arabinopyranose mutase 2 (347 aa).

An N-linked (Glc...) arginine glycan is attached at Arg-145.

Belongs to the RGP family. Heteromers with UAM1 and UAM3. Post-translationally, is not reversibly glycosylated in vitro by UDP-glucose, UDP-xylose and UDP-galactose.

It is found in the golgi apparatus. Functionally, probable inactive UDP-L-arabinose mutase. Inactive in vitro, but associates with UAM1 and UAM3. This Oryza sativa subsp. japonica (Rice) protein is Probable inactive UDP-arabinopyranose mutase 2.